We begin with the raw amino-acid sequence, 341 residues long: Phosphate acyltransferase (341 aa).

This sequence belongs to the PlsX family. In terms of assembly, homodimer. Probably interacts with PlsY.

The protein resides in the cytoplasm. It catalyses the reaction a fatty acyl-[ACP] + phosphate = an acyl phosphate + holo-[ACP]. It functions in the pathway lipid metabolism; phospholipid metabolism. Catalyzes the reversible formation of acyl-phosphate (acyl-PO(4)) from acyl-[acyl-carrier-protein] (acyl-ACP). This enzyme utilizes acyl-ACP as fatty acyl donor, but not acyl-CoA. The sequence is that of Phosphate acyltransferase from Vibrio vulnificus (strain CMCP6).